The chain runs to 1603 residues: Protein TIC 214 (1603 aa).

Transmembrane regions (helical) follow at residues V11 to L31, L58 to I78, L86 to Y106, I131 to L151, L167 to I187, and F213 to F233.

It belongs to the TIC214 family. Part of the Tic complex.

It is found in the plastid. The protein localises to the chloroplast inner membrane. Functionally, involved in protein precursor import into chloroplasts. May be part of an intermediate translocation complex acting as a protein-conducting channel at the inner envelope. The sequence is that of Protein TIC 214 from Physcomitrium patens (Spreading-leaved earth moss).